We begin with the raw amino-acid sequence, 275 residues long: Large ribosomal subunit protein uL2 (275 aa).

The tract at residues 208–275 (AGAKRWRGRR…NMIIRDRRKK (68 aa)) is disordered. 2 stretches are compositionally biased toward basic residues: residues 209–219 (GAKRWRGRRPT) and 254–263 (KGYKTRRNKR).

Belongs to the universal ribosomal protein uL2 family. In terms of assembly, part of the 50S ribosomal subunit. Forms a bridge to the 30S subunit in the 70S ribosome.

Functionally, one of the primary rRNA binding proteins. Required for association of the 30S and 50S subunits to form the 70S ribosome, for tRNA binding and peptide bond formation. It has been suggested to have peptidyltransferase activity; this is somewhat controversial. Makes several contacts with the 16S rRNA in the 70S ribosome. In Coxiella burnetii (strain CbuG_Q212) (Coxiella burnetii (strain Q212)), this protein is Large ribosomal subunit protein uL2.